Consider the following 114-residue polypeptide: UPF0757 protein YmgG (114 aa).

It belongs to the UPF0757 family.

This Escherichia fergusonii (strain ATCC 35469 / DSM 13698 / CCUG 18766 / IAM 14443 / JCM 21226 / LMG 7866 / NBRC 102419 / NCTC 12128 / CDC 0568-73) protein is UPF0757 protein YmgG.